The primary structure comprises 419 residues: Capsule polysaccharide modification protein LipB (419 aa).

The protein resides in the cell inner membrane. Its function is as follows. Involved in the phospholipid modification of the capsular polysaccharide, a strong requirement for its translocation to the cell surface. The sequence is that of Capsule polysaccharide modification protein LipB (lipB) from Neisseria meningitidis serogroup B (strain ATCC BAA-335 / MC58).